A 160-amino-acid polypeptide reads, in one-letter code: Small ribosomal subunit protein uS7 (160 aa).

The protein belongs to the universal ribosomal protein uS7 family. In terms of assembly, part of the 30S ribosomal subunit. Contacts proteins S9 and S11.

Functionally, one of the primary rRNA binding proteins, it binds directly to 16S rRNA where it nucleates assembly of the head domain of the 30S subunit. Is located at the subunit interface close to the decoding center, probably blocks exit of the E-site tRNA. This Rickettsia typhi (strain ATCC VR-144 / Wilmington) protein is Small ribosomal subunit protein uS7.